A 347-amino-acid polypeptide reads, in one-letter code: 5-deoxyribose 1-phosphate isomerase (347 aa).

Substrate contacts are provided by residues 48 to 50 (RGA), arginine 91, and glutamine 198. Aspartate 239 functions as the Proton donor in the catalytic mechanism. A substrate-binding site is contributed by 249-250 (NK).

This sequence belongs to the EIF-2B alpha/beta/delta subunits family. DrdI subfamily.

It catalyses the reaction 5-deoxy-alpha-D-ribose 1-phosphate = 5-deoxy-D-ribulose 1-phosphate. It participates in carbohydrate degradation. In terms of biological role, catalyzes the isomerization of 5-deoxy-alpha-D-ribose 1-phosphate to 5-deoxy-D-ribulose 1-phosphate, as part of a 5-deoxyribose salvage pathway that recycles this toxic radical SAM enzyme by-product to mainstream metabolites. The chain is 5-deoxyribose 1-phosphate isomerase from Bacillus thuringiensis subsp. konkukian (strain 97-27).